Here is a 570-residue protein sequence, read N- to C-terminus: MRRRSRMLLCFALLWVLGIAYYMYSGGGSALAAGGGGAGRKGDWNDIDSIKKKDLHHSRGDEKAQGVETLPPGKVRWPDFNQEAYVGGTMVRSGQDPYARNKFNQVESDKLHMDRGIPDTRHDQCQRKQWRVDLPATSVVITFHNEARSALLRTVVSVLKRSPPHLIKEIILVDDYSNDPEDGALLGKIEKVRVLRNDRREGLMRSRVRGADAAQAKVLTFLDSHCECNERWLEPLLERVAEDRTRVVSPIIDVINMDNFQYVGASADLKGGFDWNLVFKWDYMTPEQRRSRQGNPVAPIKTPMIAGGLFVMDKLYFEELGKYDMMMDVWGGENLEISFRVWQCGGSLEIIPCSRVGHVFRKQHPYTFPGGSGTVFARNTRRAAEVWMDEYKHFYYAAVPSARNVPYGNIQSRLELRKKLGCKPFKWYLDNVYPELRVPDHQDIAFGALQQGTNCLDTLGHFADGVVGIYECHNAGGNQEWALTKEKSVKHMDLCLTVVDRSPGSLIRLQGCRENDSRQKWEQIEGNSKLRHVGSNLCLDSRTAKSGGLSVEVCGPALSQQWKFSLNLQQ.

Residues 1–6 lie on the Cytoplasmic side of the membrane; it reads MRRRSR. A helical; Signal-anchor for type II membrane protein membrane pass occupies residues 7 to 24; it reads MLLCFALLWVLGIAYYMY. Residues 25–570 lie on the Lumenal side of the membrane; it reads SGGGSALAAG…QWKFSLNLQQ (546 aa). Ser29 is a glycosylation site (O-linked (Xyl...) (chondroitin sulfate) serine). 4 disulfides stabilise this stretch: Cys125–Cys353, Cys344–Cys422, Cys455–Cys472, and Cys495–Cys512. Residues 134 to 239 form a catalytic subdomain A region; sequence LPATSVVITF…ERWLEPLLER (106 aa). Residues Thr142, Asp175, and Arg200 each coordinate substrate. Mn(2+) is bound at residue Asp223. Position 224 (Ser224) interacts with substrate. Residue His225 coordinates Mn(2+). The tract at residues 299–361 is catalytic subdomain B; the sequence is PIKTPMIAGG…PCSRVGHVFR (63 aa). Trp330 contributes to the substrate binding site. His358 is a binding site for Mn(2+). Substrate is bound by residues Arg361, His364, and Tyr366. The Ricin B-type lectin domain maps to 442–565; it reads QDIAFGALQQ…PALSQQWKFS (124 aa). The N-linked (GlcNAc...) asparagine glycan is linked to Asn515. Ser535 carries the phosphoserine modification. The cysteines at positions 538 and 554 are disulfide-linked.

Belongs to the glycosyltransferase 2 family. GalNAc-T subfamily. Mn(2+) is required as a cofactor. In terms of tissue distribution, widely expressed at high level.

The protein resides in the golgi apparatus. It localises to the golgi stack membrane. The protein localises to the secreted. It catalyses the reaction L-seryl-[protein] + UDP-N-acetyl-alpha-D-galactosamine = a 3-O-[N-acetyl-alpha-D-galactosaminyl]-L-seryl-[protein] + UDP + H(+). The enzyme catalyses L-threonyl-[protein] + UDP-N-acetyl-alpha-D-galactosamine = a 3-O-[N-acetyl-alpha-D-galactosaminyl]-L-threonyl-[protein] + UDP + H(+). The protein operates within protein modification; protein glycosylation. Catalyzes the initial reaction in O-linked oligosaccharide biosynthesis, the transfer of an N-acetyl-D-galactosamine residue to a serine or threonine residue on the protein receptor. Has a broad spectrum of substrates for peptides such as EA2, Muc5AC, Muc1a, Muc1b. Probably involved in O-linked glycosylation of the immunoglobulin A1 (IgA1) hinge region. Involved in O-linked glycosylation of APOC-III, ANGPTL3 and PLTP. It participates in the regulation of HDL-C metabolism. In Mus musculus (Mouse), this protein is Polypeptide N-acetylgalactosaminyltransferase 2 (Galnt2).